A 230-amino-acid chain; its full sequence is MGQKIHPLGFRIGITQKHRSSWFASSKDYSVLLQEDHKIRSFIHGKLSNASIAKIEINRKADQVEVLIATARPGIVLGKSGAGIESLRNSLTLILDPNKQIRVNVVEISDPDSEATLVAEFITQQLEKRVAFRRAVRQAVQRAQRANTQGVKIQVSGRLNGAEIARSEWVREGRVPLQTLRADIDYCHRQAHTTYGVLGVKVWLFKGELLPDSKVVELAPSQDQINPDVS.

The region spanning I39–S109 is the KH type-2 domain.

This sequence belongs to the universal ribosomal protein uS3 family. In terms of assembly, part of the 30S ribosomal subunit.

The protein resides in the plastid. It localises to the chloroplast. In Porphyra purpurea (Red seaweed), this protein is Small ribosomal subunit protein uS3c (rps3).